Reading from the N-terminus, the 218-residue chain is Embryonic polyadenylate-binding protein 2-A (218 aa).

The segment covering 1-16 (MSERVSEEPGLDKGDG) has biased composition (basic and acidic residues). 2 disordered regions span residues 1 to 26 (MSER…DDPE) and 169 to 218 (RTNM…NHPY). The region spanning 93–170 (RSVYVGNVDY…RTIKVLPKRT (78 aa)) is the RRM domain. Residues 205–218 (FRGCGRPGPLNHPY) are compositionally biased toward low complexity.

The protein localises to the cytoplasm. In terms of biological role, binds the poly(A) tail of mRNA. Unable to interact with the cap-binding complex and is therefore unlikely to be involved in translation initiation. This Xenopus laevis (African clawed frog) protein is Embryonic polyadenylate-binding protein 2-A (Pabpn1l-a).